The sequence spans 799 residues: Protein translocase subunit SecA (799 aa).

ATP contacts are provided by residues glutamine 85, 103-107 (GEGKT), and aspartate 504.

It belongs to the SecA family. As to quaternary structure, monomer and homodimer. Part of the essential Sec protein translocation apparatus which comprises SecA, SecYEG and auxiliary proteins SecDF. Other proteins may also be involved.

The protein localises to the cell membrane. The protein resides in the cytoplasm. The catalysed reaction is ATP + H2O + cellular proteinSide 1 = ADP + phosphate + cellular proteinSide 2.. Functionally, part of the Sec protein translocase complex. Interacts with the SecYEG preprotein conducting channel. Has a central role in coupling the hydrolysis of ATP to the transfer of proteins into and across the cell membrane, serving as an ATP-driven molecular motor driving the stepwise translocation of polypeptide chains across the membrane. In Lactobacillus gasseri (strain ATCC 33323 / DSM 20243 / BCRC 14619 / CIP 102991 / JCM 1131 / KCTC 3163 / NCIMB 11718 / NCTC 13722 / AM63), this protein is Protein translocase subunit SecA.